A 205-amino-acid polypeptide reads, in one-letter code: Methylthioribulose-1-phosphate dehydratase (205 aa).

Positions 94 and 96 each coordinate Zn(2+).

This sequence belongs to the aldolase class II family. MtnB subfamily. Requires Zn(2+) as cofactor.

It carries out the reaction 5-(methylsulfanyl)-D-ribulose 1-phosphate = 5-methylsulfanyl-2,3-dioxopentyl phosphate + H2O. The protein operates within amino-acid biosynthesis; L-methionine biosynthesis via salvage pathway; L-methionine from S-methyl-5-thio-alpha-D-ribose 1-phosphate: step 2/6. Catalyzes the dehydration of methylthioribulose-1-phosphate (MTRu-1-P) into 2,3-diketo-5-methylthiopentyl-1-phosphate (DK-MTP-1-P). The protein is Methylthioribulose-1-phosphate dehydratase of Pectobacterium carotovorum subsp. carotovorum (strain PC1).